We begin with the raw amino-acid sequence, 326 residues long: Probable iron chelatin transport system permease protein HP_0889 (326 aa).

Transmembrane regions (helical) follow at residues 7 to 27 (IALACVILAVVVLLFGGESLS), 64 to 84 (ILALLVGASLSGSGVVMQTIF), 91 to 111 (PFLLGISSGAMLGVAMAIAVV), 113 to 133 (SNIAILAFFGAILASLAVLAM), 142 to 162 (LSLVLSGVVLSAFLSALAGAI), 164 to 184 (FFVIPQKAQAIVVWLLGSLSL), 187 to 207 (YKDCLIAFIGLSLGFIPLFLL), 241 to 261 (VASALAVSVSGTIGWIGLVIP), 275 to 295 (LLLSSLLMGAFFLLLADVVAK), and 301 to 321 (DLPVGIATSVLGAPFFLWLLF).

Belongs to the binding-protein-dependent transport system permease family. FecCD subfamily.

The protein resides in the cell inner membrane. Its function is as follows. Part of a binding-protein-dependent transport system for an iron chelatin; probably responsible for the translocation of the substrate across the membrane. The protein is Probable iron chelatin transport system permease protein HP_0889 of Helicobacter pylori (strain ATCC 700392 / 26695) (Campylobacter pylori).